We begin with the raw amino-acid sequence, 97 residues long: Aspartyl/glutamyl-tRNA(Asn/Gln) amidotransferase subunit C (97 aa).

Belongs to the GatC family. As to quaternary structure, heterotrimer of A, B and C subunits.

The enzyme catalyses L-glutamyl-tRNA(Gln) + L-glutamine + ATP + H2O = L-glutaminyl-tRNA(Gln) + L-glutamate + ADP + phosphate + H(+). It catalyses the reaction L-aspartyl-tRNA(Asn) + L-glutamine + ATP + H2O = L-asparaginyl-tRNA(Asn) + L-glutamate + ADP + phosphate + 2 H(+). Functionally, allows the formation of correctly charged Asn-tRNA(Asn) or Gln-tRNA(Gln) through the transamidation of misacylated Asp-tRNA(Asn) or Glu-tRNA(Gln) in organisms which lack either or both of asparaginyl-tRNA or glutaminyl-tRNA synthetases. The reaction takes place in the presence of glutamine and ATP through an activated phospho-Asp-tRNA(Asn) or phospho-Glu-tRNA(Gln). In Roseiflexus sp. (strain RS-1), this protein is Aspartyl/glutamyl-tRNA(Asn/Gln) amidotransferase subunit C.